We begin with the raw amino-acid sequence, 270 residues long: Small ribosomal subunit protein eS1 (270 aa).

Disordered regions lie at residues Met-1–Lys-20 and Gly-238–Val-270.

It belongs to the eukaryotic ribosomal protein eS1 family. As to quaternary structure, component of the small ribosomal subunit. Mature ribosomes consist of a small (40S) and a large (60S) subunit. The 40S subunit contains about 33 different proteins and 1 molecule of RNA (18S). The 60S subunit contains about 49 different proteins and 3 molecules of RNA (28S, 5.8S and 5S).

The protein resides in the cytoplasm. This Culex quinquefasciatus (Southern house mosquito) protein is Small ribosomal subunit protein eS1.